The chain runs to 166 residues: Large ribosomal subunit protein uL10 (166 aa).

Belongs to the universal ribosomal protein uL10 family. Part of the ribosomal stalk of the 50S ribosomal subunit. The N-terminus interacts with L11 and the large rRNA to form the base of the stalk. The C-terminus forms an elongated spine to which L12 dimers bind in a sequential fashion forming a multimeric L10(L12)X complex.

In terms of biological role, forms part of the ribosomal stalk, playing a central role in the interaction of the ribosome with GTP-bound translation factors. This chain is Large ribosomal subunit protein uL10, found in Bacillus licheniformis (strain ATCC 14580 / DSM 13 / JCM 2505 / CCUG 7422 / NBRC 12200 / NCIMB 9375 / NCTC 10341 / NRRL NRS-1264 / Gibson 46).